The chain runs to 1198 residues: MAAAIGVRGRFELLSCSGPGWLISLSALLSVVARGALATTHWVVTEDGKIQQQVDSPMNLKHPHDLVILMRQETTVNYLKELEKQLVAQKIHIEENEDRDTGLEQRHNKEDPDCIKAKVPLGDLDLYDGTYITLESKDVRPEDFIDTESPVPPDPEQPDCTKILELPYSIHAFQHLRGVQERVNLSAPLLPKEDPIFTYLSKRLGRSIDDIGHLIHEGLQKNSSSWVLYNLASFYWRIKNEPYQVVECTMRALHFSSRHNKDIALVNLANVLHRAHFSADAAVVVHAALDDSAFFTSYYTLGNIYAMLGEYNHSVLCYDHALQAKPGFEQAIKRKHAVLCQQKLEQKLEAQHRSLQRTLNELKEYQKQHDHYLRQQEILEKHKLIQEEQILRNIIHETQMAKEAQLGNHQICRLVNQQHSLHCQWDQPVRYHRGDIFENVDYVQFGDDSSTSSMMSVNFDVPTNQSDVSESVRSSPVAHSVLWVWGRDSDAYRDKQHILWPKRADCTDSYPRVPLGGELPTYFLPPENKGLRIHELTSDDYSSEEEAQTPDCSITDFRKSHTLSYLVKELEVRMDLKAKIPDDHARKILLSRIKNYTIPEEEIGSFLFHAINKPNAPVWLILNEAGLYWRAVGNSTFAIACLQRALNLAPVQYQDIPLVNLANLLIHYGLHLDATKLLLQALAVNSSEPLTFLSLGNAYLALKNVSGALEAFRQALKLTTRCPECESSLKLIRCMQFYPFLYNITSSVCSGHCHEKTLDNSHDKQKYFAKPQSLDAAEEEPSRHGADEDPVLSVENAGRDSDALRLESTVVEESNGSDEVEKSEETKMSEEILALVDEFQQAWPLEGLGGTLEMKGRRLDLQGIRVLKKGPQDGVAKSSCYGDCRSEDDEATEWITFQVKRVKKPKGDHKKPPGKKVEASQAENGQRYQANLEITGPKVASPGPQEKKRDYQSMGWPSPDECLKLRWVELTAIVSTWLAVSSKNIDITEHIDFATPIQQPAMEPLCNGNLPTSMHTLDHLHGVSNRASLHYTGESQLTEVLQNLGKDQYPQQSLEQIGTRIAKVLEKNQTSWVLSSMAALYWRVKGQGKKAIDCLRQALHYAPHQMKDVPLISLANILHNAKLWNDAVVVATMAVEIAPHFAVNHFTLGNVYVAMEEFEKALVWYESTLKLQPEFVPAKNRIQTIQCHLMLKKGRRSP.

Residues 295–328 form a TPR 1 repeat; it reads FTSYYTLGNIYAMLGEYNHSVLCYDHALQAKPGF. Residues 340-382 adopt a coiled-coil conformation; it reads CQQKLEQKLEAQHRSLQRTLNELKEYQKQHDHYLRQQEILEKH. 2 TPR repeats span residues 619–652 and 689–722; these read WLIL…APVQ and PLTF…TTRC. Disordered stretches follow at residues 771-825 and 903-924; these read PQSL…KSEE and KKPK…QAEN. Over residues 903–914 the composition is skewed to basic residues; it reads KKPKGDHKKPPG. TPR repeat units follow at residues 1071–1105, 1108–1141, and 1142–1175; these read SWVL…APHQ, DVPL…APHF, and AVNH…QPEF.

It belongs to the TTC17 family. As to quaternary structure, interacts with CATIP. As to expression, expressed in germ cells as well as in somatic cells of the testis (at protein level). Ubiquitous.

The protein localises to the cytoplasm. The protein resides in the cell membrane. It localises to the cytoskeleton. Its function is as follows. Plays a role in primary ciliogenesis by modulating actin polymerization. In Rattus norvegicus (Rat), this protein is Tetratricopeptide repeat protein 17 (Ttc17).